The chain runs to 290 residues: Short neuropeptide F (290 aa).

The N-terminal stretch at 1–32 is a signal peptide; it reads MFRFNPQLSHGCALALICCLLNLLMMHQPTNA. The propeptide occupies 33–87; that stretch reads ELSPVVQGEFFLPILPDDHPPNTDTSFGGPISNLYDNLLQREYAGPVVFPNHQVE. A phenylalanine amide mark is found at F100 and F134. Positions 138–290 are excised as a propeptide; the sequence is DPTLPQMRRT…IETSSIAPKN (153 aa). Residues 238–290 form a disordered region; the sequence is VAGYANDGDDTEAQLDEDTSEFQREARKPMRLRWGRSTGKAPQIETSSIAPKN. Acidic residues predominate over residues 244–257; it reads DGDDTEAQLDEDTS. A compositionally biased stretch (polar residues) spans 281 to 290; the sequence is IETSSIAPKN.

It belongs to the NPY family.

The protein localises to the secreted. Functionally, plays a role in controlling food intake and regulating body size. This Drosophila pseudoobscura pseudoobscura (Fruit fly) protein is Short neuropeptide F.